The primary structure comprises 419 residues: Caspase-12 (419 aa).

The 92-residue stretch at M1–E92 folds into the CARD domain. S85 is modified (phosphoserine). Residues F88 to E113 form a disordered region. Residues H250 and C298 contribute to the active site.

Belongs to the peptidase C14A family. Heterotetramer that consists of two anti-parallel arranged heterodimers, each one formed by two subunits (Potential). Interacts with TRAF2 under resting conditions; this interaction is reduced in ER stress conditions. As to expression, mainly expressed in skeletal muscle and lung.

In terms of biological role, involved in the activation cascade of caspases responsible for apoptosis execution. The polypeptide is Caspase-12 (Casp12) (Mus musculus (Mouse)).